The following is a 269-amino-acid chain: 1-(5-phosphoribosyl)-5-[(5-phosphoribosylamino)methylideneamino] imidazole-4-carboxamide isomerase (269 aa).

Aspartate 10 serves as the catalytic Proton acceptor. Aspartate 132 functions as the Proton donor in the catalytic mechanism.

It belongs to the HisA/HisF family.

The protein resides in the cytoplasm. The enzyme catalyses 1-(5-phospho-beta-D-ribosyl)-5-[(5-phospho-beta-D-ribosylamino)methylideneamino]imidazole-4-carboxamide = 5-[(5-phospho-1-deoxy-D-ribulos-1-ylimino)methylamino]-1-(5-phospho-beta-D-ribosyl)imidazole-4-carboxamide. It participates in amino-acid biosynthesis; L-histidine biosynthesis; L-histidine from 5-phospho-alpha-D-ribose 1-diphosphate: step 4/9. This Xylella fastidiosa (strain Temecula1 / ATCC 700964) protein is 1-(5-phosphoribosyl)-5-[(5-phosphoribosylamino)methylideneamino] imidazole-4-carboxamide isomerase.